An 87-amino-acid polypeptide reads, in one-letter code: Small ribosomal subunit protein bS20 (87 aa).

The interval 1–20 is disordered; it reads MANHKSAEKRARQTIKKTER.

The protein belongs to the bacterial ribosomal protein bS20 family.

Functionally, binds directly to 16S ribosomal RNA. The sequence is that of Small ribosomal subunit protein bS20 from Campylobacter jejuni subsp. jejuni serotype O:2 (strain ATCC 700819 / NCTC 11168).